Here is a 210-residue protein sequence, read N- to C-terminus: Large ribosomal subunit protein uL4 (210 aa).

Over residues 44 to 54 (KRQGTASTLTR) the composition is skewed to polar residues. Residues 44–94 (KRQGTASTLTRSEVRGGGRKPYKQKGTGRARQGSIRTPLRPGGGVIFGPKP) form a disordered region. The segment covering 60–71 (GGRKPYKQKGTG) has biased composition (basic residues).

Belongs to the universal ribosomal protein uL4 family. As to quaternary structure, part of the 50S ribosomal subunit.

Its function is as follows. One of the primary rRNA binding proteins, this protein initially binds near the 5'-end of the 23S rRNA. It is important during the early stages of 50S assembly. It makes multiple contacts with different domains of the 23S rRNA in the assembled 50S subunit and ribosome. Functionally, forms part of the polypeptide exit tunnel. The polypeptide is Large ribosomal subunit protein uL4 (Prochlorococcus marinus subsp. pastoris (strain CCMP1986 / NIES-2087 / MED4)).